The primary structure comprises 477 residues: Glycogen synthase (477 aa).

Lysine 15 provides a ligand contact to ADP-alpha-D-glucose.

This sequence belongs to the glycosyltransferase 1 family. Bacterial/plant glycogen synthase subfamily.

The enzyme catalyses [(1-&gt;4)-alpha-D-glucosyl](n) + ADP-alpha-D-glucose = [(1-&gt;4)-alpha-D-glucosyl](n+1) + ADP + H(+). Its pathway is glycan biosynthesis; glycogen biosynthesis. Its function is as follows. Synthesizes alpha-1,4-glucan chains using ADP-glucose. The chain is Glycogen synthase from Anaeromyxobacter dehalogenans (strain 2CP-1 / ATCC BAA-258).